Reading from the N-terminus, the 691-residue chain is MSALLQDPMIAGQVSKPLLSVRSEMNAELRGEDKAATSDSELNEPLLAPVESNDSEDTPSKLFGARGNPALSDPGTPDQHQASQTHPPFPVGPQPLLTAQQLASAVAGVMPGGPPALNQPILIPFNMAGQLGGQQGLVLTLPTANLTNIQGLVAAAAAGGIMTLPLQNLQATSSLNSQLQQLQLQLQQQQQQQQQQPPPSTNQHPQPAPQAPSQSQQQPLQPTPPQQPPPASQQPPAPTSQLQQAPQPQQHQPHSHSQNQNQPSPTQQSSSPPQKPSQSPGHGLPSPLTPPNPLQLVNNPLASQAAAAAAAMSSIASSQAFGNALSSLQGVTGQLVTNAQGQIIGTIPLMPNPGPSSQAASGTQGLQVQPITPQLLTNAQGQIIATVIGNQILPVINTQGITLSPIKPGQQLHQPSQTSVGQAASQGNLLHLAHSQASMSQSPVRQASSSSSSSSSSSALSVGQLVSNPQTAAGEVDGVNLEEIREFAKAFKIRRLSLGLTQTQVGQALSATEGPAYSQSAICRHTILRSHFFLPQEAQENTIASSLTAKLNPGLLYPARFEKLDITPKSAQKIKPVLERWMAEAEARHRAGMQNLTEFIGSEPSKKRKRRTSFTPQALEILNAHFEKNTHPSGQEMTEIAEKLNYDREVVRVWFCNKRQALKNTIKRLKQHEPATAVPLEPLTDSLEENS.

Basic and acidic residues predominate over residues 25–36; the sequence is MNAELRGEDKAA. 3 disordered regions span residues 25–93, 186–297, and 435–461; these read MNAE…PVGP, LQQQ…LQLV, and SQAS…SALS. Over residues 186–195 the composition is skewed to low complexity; it reads LQQQQQQQQQ. The span at 196-210 shows a compositional bias: pro residues; the sequence is QPPPSTNQHPQPAPQ. A compositionally biased stretch (low complexity) spans 211 to 220; it reads APSQSQQQPL. The span at 221–238 shows a compositional bias: pro residues; it reads QPTPPQQPPPASQQPPAP. 2 stretches are compositionally biased toward low complexity: residues 239 to 280 and 438 to 461; these read TSQL…SQSP and SMSQ…SALS. Residues 476–586 enclose the POU-specific domain; sequence VDGVNLEEIR…VLERWMAEAE (111 aa). A DNA-binding region (homeobox) is located at residues 607–666; it reads KRKRRTSFTPQALEILNAHFEKNTHPSGQEMTEIAEKLNYDREVVRVWFCNKRQALKNTI.

This sequence belongs to the POU transcription factor family. Class-6 subfamily. As to expression, expressed only within the CNS, where its expression is restricted to the medical habenulla, to a dispersed population of neurons in the dorsal hypothalamus, and to subsets of ganglion and amacrine cells in the retina.

Its subcellular location is the nucleus. Its function is as follows. Probable transcription factor likely to be involved in early steps in the differentiation of amacrine and ganglion cells. Recognizes and binds to the DNA sequence 5'-ATGCAAAT-3'. Isoform 1 does not bind DNA. This chain is POU domain, class 6, transcription factor 2 (POU6F2), found in Homo sapiens (Human).